The primary structure comprises 161 residues: Regulator of ribonuclease activity A (161 aa).

It belongs to the RraA family. As to quaternary structure, homotrimer. Binds to both RNA-binding sites in the C-terminal region of Rne and to RhlB.

The protein localises to the cytoplasm. Globally modulates RNA abundance by binding to RNase E (Rne) and regulating its endonucleolytic activity. Can modulate Rne action in a substrate-dependent manner by altering the composition of the degradosome. Modulates RNA-binding and helicase activities of the degradosome. The protein is Regulator of ribonuclease activity A of Klebsiella pneumoniae (strain 342).